The sequence spans 491 residues: UDP-N-acetylmuramate--L-alanine ligase (491 aa).

Residue glycine 126–threonine 132 participates in ATP binding.

It belongs to the MurCDEF family.

It localises to the cytoplasm. It catalyses the reaction UDP-N-acetyl-alpha-D-muramate + L-alanine + ATP = UDP-N-acetyl-alpha-D-muramoyl-L-alanine + ADP + phosphate + H(+). It functions in the pathway cell wall biogenesis; peptidoglycan biosynthesis. In terms of biological role, cell wall formation. The sequence is that of UDP-N-acetylmuramate--L-alanine ligase from Salmonella arizonae (strain ATCC BAA-731 / CDC346-86 / RSK2980).